Reading from the N-terminus, the 71-residue chain is DNA-directed RNA polymerase subunit omega (71 aa).

It belongs to the RNA polymerase subunit omega family. As to quaternary structure, the RNAP catalytic core consists of 2 alpha, 1 beta, 1 beta' and 1 omega subunit. When a sigma factor is associated with the core the holoenzyme is formed, which can initiate transcription.

The enzyme catalyses RNA(n) + a ribonucleoside 5'-triphosphate = RNA(n+1) + diphosphate. Functionally, promotes RNA polymerase assembly. Latches the N- and C-terminal regions of the beta' subunit thereby facilitating its interaction with the beta and alpha subunits. The polypeptide is DNA-directed RNA polymerase subunit omega (Aromatoleum aromaticum (strain DSM 19018 / LMG 30748 / EbN1) (Azoarcus sp. (strain EbN1))).